A 234-amino-acid chain; its full sequence is Fibrillarin-like rRNA/tRNA 2'-O-methyltransferase (234 aa).

S-adenosyl-L-methionine contacts are provided by residues 91 to 92, 110 to 111, 137 to 138, and 157 to 160; these read TT, EF, DA, and DVAQ.

The protein belongs to the methyltransferase superfamily. Fibrillarin family. In terms of assembly, interacts with nop5. Component of box C/D small ribonucleoprotein (sRNP) particles that contain rpl7ae, FlpA and nop5, plus a guide RNA.

Functionally, involved in pre-rRNA and tRNA processing. Utilizes the methyl donor S-adenosyl-L-methionine to catalyze the site-specific 2'-hydroxyl methylation of ribose moieties in rRNA and tRNA. Site specificity is provided by a guide RNA that base pairs with the substrate. Methylation occurs at a characteristic distance from the sequence involved in base pairing with the guide RNA. This is Fibrillarin-like rRNA/tRNA 2'-O-methyltransferase from Pyrobaculum calidifontis (strain DSM 21063 / JCM 11548 / VA1).